The sequence spans 339 residues: DNA-directed RNA polymerase subunit alpha (339 aa).

Residues 1-233 (MVREEVAGST…DLFLPFLHAE (233 aa)) are alpha N-terminal domain (alpha-NTD). An alpha C-terminal domain (alpha-CTD) region spans residues 266–339 (GIPLNCIFID…IDLLKNKLSF (74 aa)).

The protein belongs to the RNA polymerase alpha chain family. In terms of assembly, in plastids the minimal PEP RNA polymerase catalytic core is composed of four subunits: alpha, beta, beta', and beta''. When a (nuclear-encoded) sigma factor is associated with the core the holoenzyme is formed, which can initiate transcription.

The protein resides in the plastid. It is found in the chloroplast. The catalysed reaction is RNA(n) + a ribonucleoside 5'-triphosphate = RNA(n+1) + diphosphate. Its function is as follows. DNA-dependent RNA polymerase catalyzes the transcription of DNA into RNA using the four ribonucleoside triphosphates as substrates. In Hordeum bulbosum (Bulbous barley), this protein is DNA-directed RNA polymerase subunit alpha.